The chain runs to 203 residues: Proline-rich protein 1 (203 aa).

The signal sequence occupies residues 1–20 (MMKLGLYLTLLFLSVWTVSG).

As to expression, component of the acid-insoluble and acid-soluble organic matrix of calcified layers of the shell (at protein level).

The protein localises to the secreted. This is Proline-rich protein 1 from Lottia gigantea (Giant owl limpet).